A 350-amino-acid polypeptide reads, in one-letter code: Phosphotriesterase-related protein (350 aa).

A divalent metal cation is bound by residues histidine 22, histidine 24, glutamate 169, histidine 201, histidine 230, and aspartate 298.

It belongs to the metallo-dependent hydrolases superfamily. Phosphotriesterase family. The cofactor is a divalent metal cation.

This chain is Phosphotriesterase-related protein, found in Drosophila sechellia (Fruit fly).